We begin with the raw amino-acid sequence, 437 residues long: MAKHATPKLDQLESGPWPSFVSDIKQEAAYRAANPKGLDYQVPVDCPEDLLGVLELSYDEGETHWKHGGIVGVFGYGGGVIGRYCDQPEKFPGVAHFHTVRVAQPSGKYYSADYLRQLCDIWDLRGSGLTNMHGSTGDIVLLGTQTPQLEEIFFELTHNLNTDLGGSGSNLRTPESCLGKSRCEFACYDSQAACYELTMEYQDELHRPAFPYKFKFKFDACPNGCVASIARSDFSVIGTWKDDIKIDAEAVKAYVAGEFKPNAGAHSGRDWGKFDIEAEVVNRCPSKCMKWDGSKLSIDNKECVRCMHCINTMPRALHIGDERGASILCGAKAPILDGAQMGSLLVPFVAAEEPFDEIKEVVEKIWDWWMEEGKNRERLGETMKRLSFQKLLEVTEIAPVPQHVKEPRTNPYIFFKEEEVPGGWDRDITEYRKRHLR.

[4Fe-4S] cluster contacts are provided by C177, C183, C221, C225, C284, C303, C306, and C309. A 4Fe-4S ferredoxin-type domain is found at 294–322; that stretch reads SKLSIDNKECVRCMHCINTMPRALHIGDE.

As to quaternary structure, heterohexamer of two alpha, two beta and two gamma subunits.

Part of the complex that catalyzes the reduction of sulfite to sulfide. The alpha and beta subunits may have arisen by gene duplication. They both bind 2 iron-sulfur clusters, but the alpha subunit seems to be catalytically inactive, due to substitutions along the putative substrate access channel, and because it binds sirohydrochlorin (the dematallated form of siroheme) instead of siroheme. In Nitratidesulfovibrio vulgaris (strain ATCC 29579 / DSM 644 / CCUG 34227 / NCIMB 8303 / VKM B-1760 / Hildenborough) (Desulfovibrio vulgaris), this protein is Sulfite reductase, dissimilatory-type subunit alpha (dsvA).